The primary structure comprises 282 residues: MITTESISAIRKQVLAWRLKGETVAFVPTMGNLHLGHLTLVREAKSRADHVVASIFVNPMQFGQNEDLDAYPRTLSDDQSALVEAGAELLFTPTPSIIYPKGMEAQTFVEVPLISDQLCGESRPGHFRGVATIVCKLFNIVQPDIAVFGQKDFQQLLVIKTMVEDLSMPIEIIGVETIREDSGLAMSSRNGYLTAAQKQQAAVLKQTLDKMAIELRAGKQTDEVISTAKQAISAAGFDNDYLDIRNAKTFNKADSSDAEQVILVAAYMGATRLIDNLIVKLK.

30–37 (MGNLHLGH) lines the ATP pocket. The active-site Proton donor is the histidine 37. Residue glutamine 61 coordinates (R)-pantoate. Residue glutamine 61 coordinates beta-alanine. Residue 149 to 152 (GQKD) participates in ATP binding. Glutamine 155 lines the (R)-pantoate pocket. ATP contacts are provided by residues isoleucine 178 and 186-189 (MSSR).

This sequence belongs to the pantothenate synthetase family. In terms of assembly, homodimer.

The protein localises to the cytoplasm. It catalyses the reaction (R)-pantoate + beta-alanine + ATP = (R)-pantothenate + AMP + diphosphate + H(+). It functions in the pathway cofactor biosynthesis; (R)-pantothenate biosynthesis; (R)-pantothenate from (R)-pantoate and beta-alanine: step 1/1. Its function is as follows. Catalyzes the condensation of pantoate with beta-alanine in an ATP-dependent reaction via a pantoyl-adenylate intermediate. In Shewanella piezotolerans (strain WP3 / JCM 13877), this protein is Pantothenate synthetase.